A 227-amino-acid polypeptide reads, in one-letter code: 2-C-methyl-D-erythritol 4-phosphate cytidylyltransferase (227 aa).

It belongs to the IspD/TarI cytidylyltransferase family. IspD subfamily.

It catalyses the reaction 2-C-methyl-D-erythritol 4-phosphate + CTP + H(+) = 4-CDP-2-C-methyl-D-erythritol + diphosphate. Its pathway is isoprenoid biosynthesis; isopentenyl diphosphate biosynthesis via DXP pathway; isopentenyl diphosphate from 1-deoxy-D-xylulose 5-phosphate: step 2/6. In terms of biological role, catalyzes the formation of 4-diphosphocytidyl-2-C-methyl-D-erythritol from CTP and 2-C-methyl-D-erythritol 4-phosphate (MEP). In Tolumonas auensis (strain DSM 9187 / NBRC 110442 / TA 4), this protein is 2-C-methyl-D-erythritol 4-phosphate cytidylyltransferase.